Reading from the N-terminus, the 590-residue chain is Cationic amino acid transporter 8, vacuolar (590 aa).

The Cytoplasmic portion of the chain corresponds to 1 to 85 (MIPASMEEAH…ESENPMRRCL (85 aa)). The chain crosses the membrane as a helical span at residues 86–106 (TWWDLLWLSFGSVVGSGVFVI). Residues 107–114 (TGQEARVG) are Vacuolar-facing. A helical transmembrane segment spans residues 115 to 135 (AGPAVVLSYAISGVSALLSVL). Topologically, residues 136-160 (CYAEFGVEIPVAGGSFSYLRVELGD) are cytoplasmic. Residues 161–181 (FIAFIAAGNILLEAMVGAAGL) traverse the membrane as a helical segment. The Vacuolar portion of the chain corresponds to 182-209 (GRSWSSYLASLVKNDSDYFRIKVDSFAK). An N-linked (GlcNAc...) asparagine glycan is attached at asparagine 195. A helical transmembrane segment spans residues 210–230 (GFDLLDPVAVAVLLVANGIAM). The Cytoplasmic portion of the chain corresponds to 231-238 (TGTKRTSW). A helical transmembrane segment spans residues 239–259 (LNLITSMVTVCIIVFIVVVGF). The Vacuolar portion of the chain corresponds to 260-266 (THSKTSN). Residues 267–287 (LVPFFPYGAKGVVQSAAVVYW) traverse the membrane as a helical segment. Over 288–310 (SYTGFDMVANMAEETEKPSRDIP) the chain is Cytoplasmic. The helical transmembrane segment at 311–331 (IGLVGSMSMITVVYCLMALAL) threads the bilayer. The Vacuolar portion of the chain corresponds to 332-359 (TMMVKYTEIDANAAYSVAFAQIGMKWAK). A helical membrane pass occupies residues 360-380 (YLVGICALKGMTTSLLVGSLG). The Cytoplasmic portion of the chain corresponds to 381 to 407 (QARYTTQIARSHMIPPWFALVHPKTGT). A helical transmembrane segment spans residues 408-428 (PIYATLLVTILSSIISFFTSL). Position 429 (glutamate 429) is a topological domain, vacuolar. Residues 430 to 450 (VLSSVFSFATLFIFMLVAVAL) traverse the membrane as a helical segment. Residues 451-465 (LVRRYYVKDVTPEAG) lie on the Cytoplasmic side of the membrane. Residues 466-486 (LLKFLGFLFLIIASSIGVSAL) traverse the membrane as a helical segment. Residues 487-493 (WNSGVKG) are Vacuolar-facing. Residues 494 to 514 (WIAYTVTGVIWFIGTLGLALL) form a helical membrane-spanning segment. Residues 515–522 (PKYRVPKV) are Cytoplasmic-facing. The chain crosses the membrane as a helical span at residues 523–543 (WGVPLVPWLPSFSIAMNLFLI). Residues 544–553 (GSLGYVAFLR) lie on the Vacuolar side of the membrane. Residues 554-574 (FIICTMVMLLYYLFVGLHATY) traverse the membrane as a helical segment. Over 575–590 (DVAHQPLEEAKFEGER) the chain is Cytoplasmic.

It belongs to the amino acid-polyamine-organocation (APC) superfamily. Cationic amino acid transporter (CAT) (TC 2.A.3.3) family. In terms of tissue distribution, expressed in roots, stems, flowers and leaves. Mostly present in young and rapidly dividing tissues such as the shoot and root apical meristem, and in young leaves and petioles during seedling development.

The protein resides in the cell membrane. Permease involved in the transport of the cationic neutral or acidic amino acids. This is Cationic amino acid transporter 8, vacuolar (CAT8) from Arabidopsis thaliana (Mouse-ear cress).